We begin with the raw amino-acid sequence, 204 residues long: Holliday junction resolvase RecU (204 aa).

Mg(2+) contacts are provided by Thr-89, Asp-91, Asp-104, and Gln-123.

This sequence belongs to the RecU family. It depends on Mg(2+) as a cofactor.

The protein localises to the cytoplasm. The catalysed reaction is Endonucleolytic cleavage at a junction such as a reciprocal single-stranded crossover between two homologous DNA duplexes (Holliday junction).. Endonuclease that resolves Holliday junction intermediates in genetic recombination. Cleaves mobile four-strand junctions by introducing symmetrical nicks in paired strands. Promotes annealing of linear ssDNA with homologous dsDNA. Required for DNA repair, homologous recombination and chromosome segregation. This chain is Holliday junction resolvase RecU, found in Leuconostoc mesenteroides subsp. mesenteroides (strain ATCC 8293 / DSM 20343 / BCRC 11652 / CCM 1803 / JCM 6124 / NCDO 523 / NBRC 100496 / NCIMB 8023 / NCTC 12954 / NRRL B-1118 / 37Y).